A 442-amino-acid polypeptide reads, in one-letter code: GDP-L-galactose phosphorylase 1 (442 aa).

Histidine 238 (tele-GMP-histidine intermediate) is an active-site residue.

Belongs to the GDPGP1 family. Interacts with TLP1. As to expression, expressed in leaves, stems, roots, flowers and siliques. Highest expression in green tissues.

It is found in the cytoplasm. Its subcellular location is the nucleus. The catalysed reaction is GDP-beta-L-galactose + phosphate = beta-L-galactose 1-phosphate + GDP + H(+). It functions in the pathway cofactor biosynthesis; L-ascorbate biosynthesis via GDP-alpha-D-mannose pathway; L-ascorbate from GDP-alpha-D-mannose: step 2/5. Its activity is regulated as follows. Not inhibited by dithiothreitol, N-ethylmaleimide, phenylmethane sulfonyl fluoride, ascorbate, L-galactose and L-galactonolactone. In terms of biological role, catalyzes a reaction of the Smirnoff-Wheeler pathway, the major route to ascorbate biosynthesis in plants. Acts as a phosphorylase rather than as a transferase. Uses preferentially GDP-L-galactose and GDP-D-glucose as substrates. Lower activity with GDP-L-fucose, very low activity with GDP-D-mannose, and no activity with UDP-D-glucose, UDP-D-galactose or ADP-D-glucose. Highly specific for inorganic phosphate as the guanylyl acceptor. The sequence is that of GDP-L-galactose phosphorylase 1 (VTC2) from Arabidopsis thaliana (Mouse-ear cress).